Consider the following 466-residue polypeptide: Histidine--tRNA ligase (466 aa).

Belongs to the class-II aminoacyl-tRNA synthetase family. Homodimer.

The protein resides in the cytoplasm. The catalysed reaction is tRNA(His) + L-histidine + ATP = L-histidyl-tRNA(His) + AMP + diphosphate + H(+). The polypeptide is Histidine--tRNA ligase (Xylella fastidiosa (strain M23)).